The chain runs to 144 residues: PE family protein PE9 (144 aa).

A PE domain is found at 1 to 87; sequence MSYMIATPAA…RTLTGGCGVF (87 aa). Residues 98–124 form a disordered region; the sequence is AAEHRAAGAGRRQRRRRSGDGQWRLRQ.

The protein belongs to the mycobacterial PE family. Forms a complex with PE10. The complex interacts with human TLR4.

It is found in the secreted. Its subcellular location is the cell wall. The protein resides in the cell surface. Its function is as follows. Together with PE10, induces macrophage apoptosis through human Toll-like receptor 4 (TLR4) signaling pathway. Interaction with TLR4 leads to increased levels of phospho-IRF-3, increase in the transcript levels of IFN-beta and pro-apoptotic genes, up-regulation of IL-10, down-regulation of IL-1b and enhanced levels of macrophage apoptosis. The sequence is that of PE family protein PE9 from Mycobacterium tuberculosis (strain ATCC 25618 / H37Rv).